The primary structure comprises 170 residues: MKTQRHGPSLGRWSLVLLLLGLVMPLAIVAQVLSYQEAVLRALDGINQRSSDANLYRLLDLDPRPTMDGDPDTPKPVSFTVKETVCPRTTQKSPQDCDFKEDGLVKRCVGTVILNQARDSFDISCDKDNRRFARLGNFFRKAKEKIGRGLKKIGQKIKDFWGNLVPRTES.

The first 30 residues, 1-30, serve as a signal peptide directing secretion; sequence MKTQRHGPSLGRWSLVLLLLGLVMPLAIVA. Positions 31–131 are cleaved as a propeptide — cathelin-like domain (CLD); that stretch reads QVLSYQEAVL…DISCDKDNRR (101 aa). Cystine bridges form between Cys-86–Cys-97 and Cys-108–Cys-125. The segment at 150–162 is active core; that stretch reads LKKIGQKIKDFWG.

The protein belongs to the cathelicidin family. In terms of assembly, monomer, homodimer or homotrimer (in vitro). Oligomerizes as tetra- or hexamer in solution (in vitro). Post-translationally, proteolytically cleaved by proteinase PRTN3 into antibacterial peptide LL-37. Proteolytically cleaved by cathepsin CTSG and neutrophil elastase ELANE. Resistant to proteolytic degradation in solution, and when bound to both zwitterionic (mimicking mammalian membranes) and negatively charged membranes (mimicking bacterial membranes). In terms of processing, after secretion onto the skin surface, the CAMP gene product is processed by a serine protease-dependent mechanism into multiple novel antimicrobial peptides distinct from and shorter than cathelicidin LL-37. These peptides show enhanced antimicrobial action, acquiring the ability to kill skin pathogens such as S.aureus, E.coli and C.albicans. These peptides have lost the ability to stimulate CXCL8/IL8 release from keratinocytes. The peptides act synergistically, killing bacteria at lower concentrations when present together, and maintain activity at increased salt condition.

Its subcellular location is the secreted. It is found in the vesicle. Functionally, antimicrobial protein that is an integral component of the innate immune system. Binds to bacterial lipopolysaccharides (LPS). Acts via neutrophil N-formyl peptide receptors to enhance the release of CXCL2. Postsecretory processing generates multiple cathelicidin antimicrobial peptides with various lengths which act as a topical antimicrobial defense in sweat on skin. The unprocessed precursor form, cathelicidin antimicrobial peptide, inhibits the growth of Gram-negative E.coli and E.aerogenes with efficiencies comparable to that of the mature peptide LL-37 (in vitro). Antimicrobial peptide that is an integral component of the innate immune system. Binds to bacterial lipopolysaccharides (LPS). Causes membrane permeabilization by forming transmembrane pores (in vitro). Causes lysis of E.coli. Exhibits antimicrobial activity against Gram-negative bacteria such as P.aeruginosa, S.typhimurium, E.aerogenes, E.coli and P.syringae, Gram-positive bacteria such as L.monocytogenes, S.epidermidis, S.pyogenes and S.aureus, as well as vancomycin-resistant enterococci (in vitro). Exhibits antimicrobial activity against methicillin-resistant S.aureus, P.mirabilis, and C.albicans in low-salt media, but not in media containing 100 mM NaCl (in vitro). Forms chiral supramolecular assemblies with quinolone signal (PQS) molecules of P.aeruginosa, which may lead to interference of bacterial quorum signaling and perturbance of bacterial biofilm formation. May form supramolecular fiber-like assemblies on bacterial membranes. Induces cytokine and chemokine producation as well as TNF/TNFA and CSF2/GMCSF production in normal human keratinocytes. Exhibits hemolytic activity against red blood cells. Its function is as follows. Exhibits antimicrobial activity against E.coli and B.megaterium (in vitro). The chain is Cathelicidin antimicrobial peptide from Trachypithecus cristatus (Silvered leaf-monkey).